Reading from the N-terminus, the 208-residue chain is Small ribosomal subunit protein uS4 (208 aa).

The tract at residues Leu32–Asp53 is disordered. The S4 RNA-binding domain maps to Leu99–Leu161.

Belongs to the universal ribosomal protein uS4 family. Part of the 30S ribosomal subunit. Contacts protein S5. The interaction surface between S4 and S5 is involved in control of translational fidelity.

One of the primary rRNA binding proteins, it binds directly to 16S rRNA where it nucleates assembly of the body of the 30S subunit. Its function is as follows. With S5 and S12 plays an important role in translational accuracy. The polypeptide is Small ribosomal subunit protein uS4 (Endomicrobium trichonymphae).